A 495-amino-acid chain; its full sequence is MAANWTLSWGQGGPCNSPGSDTPRSVASPETQLGNHDRNPETWHMNFRMFSCPEESDPIQALRKLTELCHLWLRPDLHTKEQILDMLVMEQFMISMPQELQVLVKVNGVQSCKDLEDLLRNNRRPKKWSIVNLLGKEYLMLNSDVEMAEAPASVRDDPRDVSSQWASSVNQMHPGTGQARREQQILPRVAALSRRQGEDFLLHKSIDVTGDPNSPRPKQTLEKDLKENREENPGLSSPEPQLPKSPNLVRAKEGKEPQKRASVENVDADTPSACVVEREALTHSGNRGDALNLSSPKRSKPDASSISQEEPQGEATPVGNRESPGQAEINPVHSPGPAGPVSHPDGQEAKALPPFACDVCNKSFKYFSQLSIHRRSHTGDRPFQCDLCRKRFLQPSDLRVHQRVHTGERPYMCDVCQKRFAHESTLQGHKRIHTGERPFKCKYCSKVFSHKGNLNVHQRTHSGEKPYKCPTCQKAFRQLGTFKRHLKTHRETTSQ.

Residues 1 to 40 form a disordered region; it reads MAANWTLSWGQGGPCNSPGSDTPRSVASPETQLGNHDRNP. The span at 17–34 shows a compositional bias: polar residues; that stretch reads SPGSDTPRSVASPETQLG. The region spanning 44 to 126 is the SCAN box domain; that stretch reads HMNFRMFSCP…DLLRNNRRPK (83 aa). Disordered stretches follow at residues 150–183 and 227–347; these read APAS…RREQ and ENRE…PDGQ. Polar residues predominate over residues 161 to 173; that stretch reads VSSQWASSVNQMH. Residues 250–262 show a composition bias toward basic and acidic residues; sequence RAKEGKEPQKRAS. The segment covering 292 to 310 has biased composition (polar residues); it reads NLSSPKRSKPDASSISQEE. 5 consecutive C2H2-type zinc fingers follow at residues 355-377, 383-405, 411-433, 439-461, and 467-489; these read FACD…RRSH, FQCD…QRVH, YMCD…KRIH, FKCK…QRTH, and YKCP…LKTH.

The protein resides in the nucleus. In terms of biological role, may be involved in transcriptional regulation. This is Zinc finger and SCAN domain-containing protein 5B (ZSCAN5B) from Homo sapiens (Human).